We begin with the raw amino-acid sequence, 294 residues long: ATP synthase gamma chain (294 aa).

This sequence belongs to the ATPase gamma chain family. In terms of assembly, F-type ATPases have 2 components, CF(1) - the catalytic core - and CF(0) - the membrane proton channel. CF(1) has five subunits: alpha(3), beta(3), gamma(1), delta(1), epsilon(1). CF(0) has three main subunits: a, b and c.

The protein localises to the cell inner membrane. In terms of biological role, produces ATP from ADP in the presence of a proton gradient across the membrane. The gamma chain is believed to be important in regulating ATPase activity and the flow of protons through the CF(0) complex. This Parvibaculum lavamentivorans (strain DS-1 / DSM 13023 / NCIMB 13966) protein is ATP synthase gamma chain.